We begin with the raw amino-acid sequence, 514 residues long: Peptide chain release factor 3 (514 aa).

Positions 8–268 (KKRRTFAIIS…TFLKFAPEPH (261 aa)) constitute a tr-type G domain. GTP contacts are provided by residues 17–24 (SHPDAGKT), 85–89 (DTPGH), and 139–142 (NKLD).

The protein belongs to the TRAFAC class translation factor GTPase superfamily. Classic translation factor GTPase family. PrfC subfamily.

It is found in the cytoplasm. Its function is as follows. Increases the formation of ribosomal termination complexes and stimulates activities of RF-1 and RF-2. It binds guanine nucleotides and has strong preference for UGA stop codons. It may interact directly with the ribosome. The stimulation of RF-1 and RF-2 is significantly reduced by GTP and GDP, but not by GMP. The polypeptide is Peptide chain release factor 3 (Streptococcus sanguinis (strain SK36)).